The sequence spans 152 residues: Transcriptional regulator MraZ (152 aa).

SpoVT-AbrB domains are found at residues Ala5–Glu52 and Ala81–Ser124.

The protein belongs to the MraZ family. As to quaternary structure, forms oligomers.

The protein localises to the cytoplasm. Its subcellular location is the nucleoid. The polypeptide is Transcriptional regulator MraZ (Shewanella baltica (strain OS155 / ATCC BAA-1091)).